Here is a 484-residue protein sequence, read N- to C-terminus: E-selectin (484 aa).

The N-terminal stretch at 1–22 (MIASQFLSALPLVLLLLRESGA) is a signal peptide. The C-type lectin domain occupies 23–140 (WSYSASTETM…CSKKKLALCY (118 aa)). Residues 23 to 429 (WSYSASTETM…CEAPAESKIP (407 aa)) lie on the Extracellular side of the membrane. Intrachain disulfides connect C41/C139, C112/C131, C144/C155, C149/C164, C166/C175, C181/C222, C194/C204, C208/C235, C240/C285, C271/C298, C303/C348, C334/C361, C366/C407, and C393/C420. Residues N61, N65, and N79 are each glycosylated (N-linked (GlcNAc...) asparagine). The Ca(2+) site is built by E102, N104, and E110. Residues 102 to 110 (EPNNKQSNE), 114 to 119 (EIYIKR), and 127 to 129 (NDE) each bind a carbohydrate. N127 and D128 together coordinate Ca(2+). Residues 141–176 (TAACTPTSCSGHGECIETINSSTCQCYPGFRGLQCE) form the EGF-like domain. N-linked (GlcNAc...) asparagine glycosylation is present at N160. Sushi domains follow at residues 179–237 (VECD…TCKA), 251–300 (VSCN…VCKA), 301–363 (VKCP…SCQV), and 364–422 (VQCS…TCEA). Residue N201 is glycosylated (N-linked (GlcNAc...) asparagine). N254 carries an N-linked (GlcNAc...) asparagine glycan. Residues N376 and N400 are each glycosylated (N-linked (GlcNAc...) asparagine). A helical membrane pass occupies residues 430–451 (LAMGLAAGGVSFMTSASFLLWL). The Cytoplasmic portion of the chain corresponds to 452–484 (LKRLRKRAKKFVPSSSSECLQPNGSYQMPSDLI).

Belongs to the selectin/LECAM family. Interacts with SELPLG/PSGL1 and PODXL2 through the sialyl Lewis X epitope. SELPLG sulfation appears not to be required for this interaction.

The protein resides in the cell membrane. Functionally, cell-surface glycoprotein having a role in immunoadhesion. Mediates in the adhesion of blood neutrophils in cytokine-activated endothelium through interaction with SELPLG/PSGL1. May have a role in capillary morphogenesis. In Sus scrofa (Pig), this protein is E-selectin (SELE).